We begin with the raw amino-acid sequence, 270 residues long: 3-phenylpropionate-dihydrodiol/cinnamic acid-dihydrodiol dehydrogenase (270 aa).

Position 10-34 (10-34 (FITGGGSGLGLALVERFIEEGAQVA)) interacts with NAD(+). Substrate is bound at residue S143. The Proton acceptor role is filled by Y156.

This sequence belongs to the short-chain dehydrogenases/reductases (SDR) family.

The catalysed reaction is 3-(cis-5,6-dihydroxycyclohexa-1,3-dien-1-yl)propanoate + NAD(+) = 3-(2,3-dihydroxyphenyl)propanoate + NADH + H(+). The enzyme catalyses (2E)-3-(cis-5,6-dihydroxycyclohexa-1,3-dien-1-yl)prop-2-enoate + NAD(+) = (2E)-3-(2,3-dihydroxyphenyl)prop-2-enoate + NADH + H(+). Its pathway is aromatic compound metabolism; 3-phenylpropanoate degradation. In terms of biological role, converts 3-phenylpropionate-dihydrodiol (PP-dihydrodiol) and cinnamic acid-dihydrodiol (CI-dihydrodiol) into 3-(2,3-dihydroxylphenyl)propanoic acid (DHPP) and 2,3-dihydroxicinnamic acid (DHCI), respectively. The protein is 3-phenylpropionate-dihydrodiol/cinnamic acid-dihydrodiol dehydrogenase of Escherichia coli (strain ATCC 8739 / DSM 1576 / NBRC 3972 / NCIMB 8545 / WDCM 00012 / Crooks).